The sequence spans 130 residues: Small ribosomal subunit protein uS9 (130 aa).

The protein belongs to the universal ribosomal protein uS9 family.

This Bacillus velezensis (strain DSM 23117 / BGSC 10A6 / LMG 26770 / FZB42) (Bacillus amyloliquefaciens subsp. plantarum) protein is Small ribosomal subunit protein uS9.